Here is an 84-residue protein sequence, read N- to C-terminus: Small ribosomal subunit protein bS16 (84 aa).

The protein belongs to the bacterial ribosomal protein bS16 family.

This chain is Small ribosomal subunit protein bS16, found in Paraburkholderia phytofirmans (strain DSM 17436 / LMG 22146 / PsJN) (Burkholderia phytofirmans).